The sequence spans 219 residues: Uridylate kinase (219 aa).

Position 9-10 (9-10 (GS)) interacts with ATP. Residue Gly41 participates in UMP binding. ATP contacts are provided by Gly42 and Arg46. UMP contacts are provided by residues Asp63 and 110 to 116 (TFPGHTT). ATP-binding residues include Thr136, Asn137, Tyr142, and Asp145.

This sequence belongs to the UMP kinase family. As to quaternary structure, homohexamer.

Its subcellular location is the cytoplasm. The enzyme catalyses UMP + ATP = UDP + ADP. It participates in pyrimidine metabolism; CTP biosynthesis via de novo pathway; UDP from UMP (UMPK route): step 1/1. Inhibited by UTP. In terms of biological role, catalyzes the reversible phosphorylation of UMP to UDP. In Archaeoglobus fulgidus (strain ATCC 49558 / DSM 4304 / JCM 9628 / NBRC 100126 / VC-16), this protein is Uridylate kinase.